The chain runs to 152 residues: B3 domain-containing protein At1g10455 (152 aa).

A DNA-binding region (TF-B3) is located at residues 24-131; sequence LKKKLSDSDL…EVKFKHFKSQ (108 aa).

The protein resides in the nucleus. This chain is B3 domain-containing protein At1g10455, found in Arabidopsis thaliana (Mouse-ear cress).